Reading from the N-terminus, the 234-residue chain is Peptidase E (234 aa).

Residues Ser123, Asp138, and His160 each act as charge relay system in the active site.

This sequence belongs to the peptidase S51 family.

It localises to the cytoplasm. The catalysed reaction is Dipeptidase E catalyzes the hydrolysis of dipeptides Asp-|-Xaa. It does not act on peptides with N-terminal Glu, Asn or Gln, nor does it cleave isoaspartyl peptides.. Functionally, hydrolyzes dipeptides containing N-terminal aspartate residues. May play a role in allowing the cell to use peptide aspartate to spare carbon otherwise required for the synthesis of the aspartate family of amino acids. In Pasteurella multocida (strain Pm70), this protein is Peptidase E.